Reading from the N-terminus, the 259-residue chain is Type III pantothenate kinase (259 aa).

D6–V13 is a binding site for ATP. Position 107 to 110 (G107 to R110) interacts with substrate. Catalysis depends on D109, which acts as the Proton acceptor. K(+) is bound at residue D129. Residue T132 coordinates ATP. Residue T184 participates in substrate binding.

The protein belongs to the type III pantothenate kinase family. In terms of assembly, homodimer. The cofactor is NH4(+). Requires K(+) as cofactor.

The protein resides in the cytoplasm. The enzyme catalyses (R)-pantothenate + ATP = (R)-4'-phosphopantothenate + ADP + H(+). It participates in cofactor biosynthesis; coenzyme A biosynthesis; CoA from (R)-pantothenate: step 1/5. Catalyzes the phosphorylation of pantothenate (Pan), the first step in CoA biosynthesis. This chain is Type III pantothenate kinase, found in Paracoccus denitrificans (strain Pd 1222).